A 396-amino-acid chain; its full sequence is Elongation factor Tu 2 (396 aa).

The tr-type G domain maps to 10 to 206 (KLHVNVGTIG…ALDTFIPDPT (197 aa)). The segment at 19-26 (GHVDHGKT) is G1. Residue 19-26 (GHVDHGKT) participates in GTP binding. Mg(2+) is bound at residue Thr26. The interval 60 to 64 (GITIS) is G2. A G3 region spans residues 81–84 (DCPG). Residues 81 to 85 (DCPGH) and 136 to 139 (NKAD) contribute to the GTP site. The segment at 136 to 139 (NKAD) is G4. The G5 stretch occupies residues 174-176 (SAR).

The protein belongs to the TRAFAC class translation factor GTPase superfamily. Classic translation factor GTPase family. EF-Tu/EF-1A subfamily. In terms of assembly, monomer.

Its subcellular location is the cytoplasm. It carries out the reaction GTP + H2O = GDP + phosphate + H(+). Functionally, GTP hydrolase that promotes the GTP-dependent binding of aminoacyl-tRNA to the A-site of ribosomes during protein biosynthesis. In Xanthomonas campestris pv. campestris (strain 8004), this protein is Elongation factor Tu 2.